The chain runs to 825 residues: ATP-dependent RNA helicase DBP4 (825 aa).

The segment at Met-1–Asp-34 is disordered. Residues Lys-19 to Asp-34 show a composition bias toward basic and acidic residues. A Q motif motif is present at residues Lys-53–Arg-81. One can recognise a Helicase ATP-binding domain in the interval Ile-84–Val-258. Ala-97 to Thr-104 contacts ATP. A DEAD box motif is present at residues Asp-206–Asp-209. One can recognise a Helicase C-terminal domain in the interval Lys-284–Leu-439. Disordered regions lie at residues Asn-508–Arg-536 and Ala-676–Asp-825. Composition is skewed to basic and acidic residues over residues Glu-677–Ala-691 and Arg-700–Arg-714. Acidic residues-rich tracts occupy residues Gly-730–Pro-739, Gly-761–Val-770, and Met-805–Glu-816.

The protein belongs to the DEAD box helicase family. DDX10/DBP4 subfamily. Interacts with the U3 and U14 snoRNAs. Associates with pre-ribosomal complexes.

It is found in the nucleus. Its subcellular location is the nucleolus. The enzyme catalyses ATP + H2O = ADP + phosphate + H(+). In terms of biological role, ATP-dependent RNA helicase required for ribosome biogenesis. Involved in the release of U14 snoRNA in pre-ribosomal complexes. Required for pre-rRNA cleavage at site A2. The polypeptide is ATP-dependent RNA helicase DBP4 (DBP4) (Chaetomium globosum (strain ATCC 6205 / CBS 148.51 / DSM 1962 / NBRC 6347 / NRRL 1970) (Soil fungus)).